The primary structure comprises 332 residues: Malate dehydrogenase (332 aa).

Residues 16-17 (QI), aspartate 43, and glycine 90 contribute to the NAD(+) site. Arginine 99 contacts oxaloacetate. Positions 113 and 132 each coordinate NAD(+). Positions 132, 163, 188, and 243 each coordinate oxaloacetate. Residue histidine 188 is the Proton acceptor of the active site.

This sequence belongs to the LDH/MDH superfamily. MDH type 2 family. Homodimer.

It localises to the cytoplasm. The enzyme catalyses (S)-malate + NAD(+) = oxaloacetate + NADH + H(+). Its function is as follows. Catalyzes the reduction of the carbonyl group of oxalacetic acid. No activity with pulegone. The sequence is that of Malate dehydrogenase (MD1) from Nicotiana tabacum (Common tobacco).